The chain runs to 206 residues: Large ribosomal subunit protein uL4 (206 aa).

Residues 47–77 form a disordered region; sequence TRAQKGRSDVTGSTRKQWRQKGTGRARTGAA.

The protein belongs to the universal ribosomal protein uL4 family. As to quaternary structure, part of the 50S ribosomal subunit.

Its function is as follows. One of the primary rRNA binding proteins, this protein initially binds near the 5'-end of the 23S rRNA. It is important during the early stages of 50S assembly. It makes multiple contacts with different domains of the 23S rRNA in the assembled 50S subunit and ribosome. Forms part of the polypeptide exit tunnel. This chain is Large ribosomal subunit protein uL4, found in Nitrosomonas europaea (strain ATCC 19718 / CIP 103999 / KCTC 2705 / NBRC 14298).